Consider the following 200-residue polypeptide: Putative 3-methyladenine DNA glycosylase (200 aa).

This sequence belongs to the DNA glycosylase MPG family.

This Methanocella arvoryzae (strain DSM 22066 / NBRC 105507 / MRE50) protein is Putative 3-methyladenine DNA glycosylase.